Consider the following 291-residue polypeptide: Pyridoxal 5'-phosphate synthase subunit PdxS (291 aa).

Aspartate 23 serves as a coordination point for D-ribose 5-phosphate. The active-site Schiff-base intermediate with D-ribose 5-phosphate is lysine 80. Residue glycine 152 coordinates D-ribose 5-phosphate. Position 164 (arginine 164) interacts with D-glyceraldehyde 3-phosphate. Residues glycine 213 and 234–235 contribute to the D-ribose 5-phosphate site; that span reads GS.

This sequence belongs to the PdxS/SNZ family. In the presence of PdxT, forms a dodecamer of heterodimers.

The catalysed reaction is aldehydo-D-ribose 5-phosphate + D-glyceraldehyde 3-phosphate + L-glutamine = pyridoxal 5'-phosphate + L-glutamate + phosphate + 3 H2O + H(+). Its pathway is cofactor biosynthesis; pyridoxal 5'-phosphate biosynthesis. Functionally, catalyzes the formation of pyridoxal 5'-phosphate from ribose 5-phosphate (RBP), glyceraldehyde 3-phosphate (G3P) and ammonia. The ammonia is provided by the PdxT subunit. Can also use ribulose 5-phosphate and dihydroxyacetone phosphate as substrates, resulting from enzyme-catalyzed isomerization of RBP and G3P, respectively. The chain is Pyridoxal 5'-phosphate synthase subunit PdxS from Methanocorpusculum labreanum (strain ATCC 43576 / DSM 4855 / Z).